Here is a 68-residue protein sequence, read N- to C-terminus: Antimicrobial peptide Eval418 (68 aa).

A signal peptide spans 1–23; sequence MRTQLAVLLVALVLLQMIAQSEA. Isoleucine amide is present on Ile-36. A propeptide spanning residues 37 to 68 is cleaved from the precursor; it reads GKRGLRNLDDLDDVFDDDLSAADLEFLKQLMR.

This sequence belongs to the non-disulfide-bridged peptide (NDBP) superfamily. Short antimicrobial peptide (group 4) family. As to expression, expressed by the venom gland.

The protein resides in the secreted. Its function is as follows. Probable antimicrobial peptide. Shows dose-dependent and time-dependent inactivation of herpes simplex virus type 1 (HSV-1) and dose-dependent inhibition of HSV-1 viral attachment to host cells. Scarcely suppress an established HSV-1 infection due to poor cellular uptake. This chain is Antimicrobial peptide Eval418, found in Euscorpiops validus (Scorpion).